The following is an 83-amino-acid chain: UPF0512 protein G (83 aa).

This sequence belongs to the UPF0512 family.

This Dictyostelium discoideum (Social amoeba) protein is UPF0512 protein G.